The primary structure comprises 951 residues: Glycine dehydrogenase (decarboxylating) 1 (951 aa).

An N6-(pyridoxal phosphate)lysine modification is found at Lys703.

It belongs to the GcvP family. As to quaternary structure, the glycine cleavage system is composed of four proteins: P, T, L and H. The cofactor is pyridoxal 5'-phosphate.

It carries out the reaction N(6)-[(R)-lipoyl]-L-lysyl-[glycine-cleavage complex H protein] + glycine + H(+) = N(6)-[(R)-S(8)-aminomethyldihydrolipoyl]-L-lysyl-[glycine-cleavage complex H protein] + CO2. Its function is as follows. The glycine cleavage system catalyzes the degradation of glycine. The P protein binds the alpha-amino group of glycine through its pyridoxal phosphate cofactor; CO(2) is released and the remaining methylamine moiety is then transferred to the lipoamide cofactor of the H protein. This is Glycine dehydrogenase (decarboxylating) 1 (gcvP1) from Pseudomonas putida (strain ATCC 47054 / DSM 6125 / CFBP 8728 / NCIMB 11950 / KT2440).